The following is a 204-amino-acid chain: dITP/XTP pyrophosphatase (204 aa).

8 to 13 lines the substrate pocket; it reads SNNAKK. Mg(2+)-binding residues include Glu-43 and Asp-72. The active-site Proton acceptor is the Asp-72. Residues Ser-73, 155–158, Lys-180, and 185–186 contribute to the substrate site; these read FGYD and HR.

Belongs to the HAM1 NTPase family. Homodimer. Mg(2+) is required as a cofactor.

The enzyme catalyses XTP + H2O = XMP + diphosphate + H(+). It carries out the reaction dITP + H2O = dIMP + diphosphate + H(+). The catalysed reaction is ITP + H2O = IMP + diphosphate + H(+). In terms of biological role, pyrophosphatase that catalyzes the hydrolysis of nucleoside triphosphates to their monophosphate derivatives, with a high preference for the non-canonical purine nucleotides XTP (xanthosine triphosphate), dITP (deoxyinosine triphosphate) and ITP. Seems to function as a house-cleaning enzyme that removes non-canonical purine nucleotides from the nucleotide pool, thus preventing their incorporation into DNA/RNA and avoiding chromosomal lesions. The protein is dITP/XTP pyrophosphatase of Cutibacterium acnes (strain DSM 16379 / KPA171202) (Propionibacterium acnes).